We begin with the raw amino-acid sequence, 333 residues long: Anthranilate phosphoribosyltransferase (333 aa).

5-phospho-alpha-D-ribose 1-diphosphate is bound by residues Gly81, 84 to 85 (GD), Thr89, 91 to 94 (NIST), 109 to 117 (KHGNRSVSS), and Ala121. Residue Gly81 participates in anthranilate binding. Ser93 provides a ligand contact to Mg(2+). Asn112 is a binding site for anthranilate. An anthranilate-binding site is contributed by Arg167. Mg(2+) contacts are provided by Asp225 and Glu226.

This sequence belongs to the anthranilate phosphoribosyltransferase family. Homodimer. The cofactor is Mg(2+).

It carries out the reaction N-(5-phospho-beta-D-ribosyl)anthranilate + diphosphate = 5-phospho-alpha-D-ribose 1-diphosphate + anthranilate. It functions in the pathway amino-acid biosynthesis; L-tryptophan biosynthesis; L-tryptophan from chorismate: step 2/5. Its function is as follows. Catalyzes the transfer of the phosphoribosyl group of 5-phosphorylribose-1-pyrophosphate (PRPP) to anthranilate to yield N-(5'-phosphoribosyl)-anthranilate (PRA). This Haemophilus influenzae (strain PittEE) protein is Anthranilate phosphoribosyltransferase.